The following is a 131-amino-acid chain: UPF0342 protein DSY1594 (131 aa).

This sequence belongs to the UPF0342 family.

The sequence is that of UPF0342 protein DSY1594 from Desulfitobacterium hafniense (strain Y51).